The sequence spans 553 residues: CTP synthase (553 aa).

Residues 1–266 (MTKNYIFITG…DNYICEYFKL (266 aa)) form an amidoligase domain region. CTP is bound at residue Ser14. Residue Ser14 participates in UTP binding. Residues 15 to 20 (SLGKGI) and Asp72 contribute to the ATP site. Asp72 and Glu140 together coordinate Mg(2+). Residues 147-149 (DIE), 187-192 (KTKPTQ), and Lys223 each bind CTP. Residues 187-192 (KTKPTQ) and Lys223 contribute to the UTP site. 239-241 (KDV) serves as a coordination point for ATP. Residues 291 to 544 (IIGIIGKYIK…IKSAKKNKKN (254 aa)) enclose the Glutamine amidotransferase type-1 domain. Gly352 contributes to the L-glutamine binding site. Catalysis depends on Cys379, which acts as the Nucleophile; for glutamine hydrolysis. L-glutamine contacts are provided by residues 380–383 (LGMQ), Glu403, and Arg472. Active-site residues include His517 and Glu519.

It belongs to the CTP synthase family. In terms of assembly, homotetramer.

It carries out the reaction UTP + L-glutamine + ATP + H2O = CTP + L-glutamate + ADP + phosphate + 2 H(+). The catalysed reaction is L-glutamine + H2O = L-glutamate + NH4(+). It catalyses the reaction UTP + NH4(+) + ATP = CTP + ADP + phosphate + 2 H(+). It participates in pyrimidine metabolism; CTP biosynthesis via de novo pathway; CTP from UDP: step 2/2. Allosterically activated by GTP, when glutamine is the substrate; GTP has no effect on the reaction when ammonia is the substrate. The allosteric effector GTP functions by stabilizing the protein conformation that binds the tetrahedral intermediate(s) formed during glutamine hydrolysis. Inhibited by the product CTP, via allosteric rather than competitive inhibition. Catalyzes the ATP-dependent amination of UTP to CTP with either L-glutamine or ammonia as the source of nitrogen. Regulates intracellular CTP levels through interactions with the four ribonucleotide triphosphates. In Buchnera aphidicola subsp. Schizaphis graminum (strain Sg), this protein is CTP synthase.